The following is a 922-amino-acid chain: Probable dipeptidyl-aminopeptidase B (922 aa).

Basic and acidic residues predominate over residues 1–16; that stretch reads MATEKGHSRDDEERVP. Residues 1 to 21 form a disordered region; sequence MATEKGHSRDDEERVPLTRGS. Over 1–99 the chain is Cytoplasmic; the sequence is MATEKGHSRD…KPMHKSVKIA (99 aa). Residues 100 to 120 traverse the membrane as a helical; Signal-anchor for type II membrane protein segment; the sequence is LWSLLFLSLGGWSLAFVLFIF. Residues 121–922 are Vacuolar-facing; it reads RSHDTYQTPI…AGLYKFKHLC (802 aa). Asn-135, Asn-200, Asn-351, and Asn-574 each carry an N-linked (GlcNAc...) asparagine glycan. Catalysis depends on Ser-756, which acts as the Charge relay system. Residue Asn-815 is glycosylated (N-linked (GlcNAc...) asparagine). Catalysis depends on charge relay system residues Asp-833 and His-866. Asn-902 carries an N-linked (GlcNAc...) asparagine glycan.

It belongs to the peptidase S9B family.

It localises to the vacuole membrane. The enzyme catalyses Release of an N-terminal dipeptide, Xaa-Yaa-|-Zaa-, from a polypeptide, preferentially when Yaa is Pro, provided Zaa is neither Pro nor hydroxyproline.. Functionally, type IV dipeptidyl-peptidase which removes N-terminal dipeptides sequentially from polypeptides having unsubstituted N-termini provided that the penultimate residue is proline. The sequence is that of Probable dipeptidyl-aminopeptidase B (DAPB) from Ajellomyces capsulatus (strain NAm1 / WU24) (Darling's disease fungus).